A 262-amino-acid chain; its full sequence is Protein crossbronx-like (262 aa).

The 165-residue stretch at R15–K179 folds into the UBC core domain.

This sequence belongs to the ubiquitin-conjugating enzyme family. FTS subfamily.

In Drosophila pseudoobscura pseudoobscura (Fruit fly), this protein is Protein crossbronx-like.